Consider the following 338-residue polypeptide: Phosphate acyltransferase (338 aa).

The protein belongs to the PlsX family. In terms of assembly, homodimer. Probably interacts with PlsY.

Its subcellular location is the cytoplasm. The catalysed reaction is a fatty acyl-[ACP] + phosphate = an acyl phosphate + holo-[ACP]. It functions in the pathway lipid metabolism; phospholipid metabolism. Catalyzes the reversible formation of acyl-phosphate (acyl-PO(4)) from acyl-[acyl-carrier-protein] (acyl-ACP). This enzyme utilizes acyl-ACP as fatty acyl donor, but not acyl-CoA. This is Phosphate acyltransferase from Salinibacter ruber (strain DSM 13855 / M31).